Reading from the N-terminus, the 349-residue chain is Phenylalanine--tRNA ligase alpha subunit (349 aa).

Residue Glu259 coordinates Mg(2+).

Belongs to the class-II aminoacyl-tRNA synthetase family. Phe-tRNA synthetase alpha subunit type 1 subfamily. Tetramer of two alpha and two beta subunits. Mg(2+) serves as cofactor.

The protein localises to the cytoplasm. It catalyses the reaction tRNA(Phe) + L-phenylalanine + ATP = L-phenylalanyl-tRNA(Phe) + AMP + diphosphate + H(+). This Lactobacillus gasseri (strain ATCC 33323 / DSM 20243 / BCRC 14619 / CIP 102991 / JCM 1131 / KCTC 3163 / NCIMB 11718 / NCTC 13722 / AM63) protein is Phenylalanine--tRNA ligase alpha subunit.